A 145-amino-acid polypeptide reads, in one-letter code: Phospholipase A2 (145 aa).

The N-terminal stretch at 1-15 (MRLLVLAALLTVGAG) is a signal peptide. Position 16 is a pyrrolidone carboxylic acid (Q16). A propeptide spans 16–22 (QAGLNSR) (removed by trypsin). Cystine bridges form between C33–C99, C49–C145, C51–C67, C66–C127, C73–C120, C83–C113, and C106–C118. Ca(2+) is bound by residues Y50, G52, and G54. H70 is an active-site residue. Ca(2+) is bound at residue D71. Residue D121 is part of the active site.

Belongs to the phospholipase A2 family. As to quaternary structure, monomer or homodimer. Requires Ca(2+) as cofactor. Activated by trypsin cleavage in the duodenum. Can also be activated by thrombin or autocatalytically.

Its subcellular location is the secreted. It carries out the reaction a 1,2-diacyl-sn-glycero-3-phosphocholine + H2O = a 1-acyl-sn-glycero-3-phosphocholine + a fatty acid + H(+). The enzyme catalyses 1,2-ditetradecanoyl-sn-glycero-3-phosphocholine + H2O = 1-tetradecanoyl-sn-glycero-3-phosphocholine + tetradecanoate + H(+). The catalysed reaction is 1,2-dihexadecanoyl-sn-glycero-3-phosphocholine + H2O = 1-hexadecanoyl-sn-glycero-3-phosphocholine + hexadecanoate + H(+). It catalyses the reaction 1-hexadecanoyl-2-(9Z-octadecenoyl)-sn-glycero-3-phosphocholine + H2O = 1-hexadecanoyl-sn-glycero-3-phosphocholine + (9Z)-octadecenoate + H(+). It carries out the reaction 1-hexadecanoyl-2-(5Z,8Z,11Z,14Z-eicosatetraenoyl)-sn-glycero-3-phosphocholine + H2O = 1-hexadecanoyl-sn-glycero-3-phosphocholine + (5Z,8Z,11Z,14Z)-eicosatetraenoate + H(+). The enzyme catalyses 1-hexadecanoyl-2-(9Z-octadecenoyl)-sn-glycero-3-phospho-(1'-sn-glycerol) + H2O = 1-hexadecanoyl-sn-glycero-3-phospho-(1'-sn-glycerol) + (9Z)-octadecenoate + H(+). The catalysed reaction is N-hexadecanoyl-1,2-di-(9Z-octadecenoyl)-sn-glycero-3-phosphoethanolamine + H2O = N-hexadecanoyl-1-(9Z-octadecenoyl)-sn-glycero-3-phosphoethanolamine + (9Z)-octadecenoate + H(+). It catalyses the reaction 1-hexadecanoyl-2-(9Z,12Z-octadecadienoyl)-sn-glycero-3-phosphoethanolamine + H2O = 1-hexadecanoyl-sn-glycero-3-phosphoethanolamine + (9Z,12Z)-octadecadienoate + H(+). It carries out the reaction N,1-dihexadecanoyl-2-(9Z,12Z-octadecadienoyl)-sn-glycero-3-phosphoethanolamine + H2O = N,1-dihexadecanoyl-sn-glycero-3-phosphoethanolamine + (9Z,12Z)-octadecadienoate + H(+). Functionally, secretory calcium-dependent phospholipase A2 that primarily targets dietary phospholipids in the intestinal tract. Hydrolyzes the ester bond of the fatty acyl group attached at sn-2 position of phospholipids (phospholipase A2 activity) with preference for phosphatidylethanolamines and phosphatidylglycerols over phosphatidylcholines. May play a role in the biosynthesis of N-acyl ethanolamines that regulate energy metabolism and inflammation in the intestinal tract. Hydrolyzes N-acyl phosphatidylethanolamines to N-acyl lysophosphatidylethanolamines, which are further cleaved by a lysophospholipase D to release N-acyl ethanolamines. May act in an autocrine and paracrine manner. Has anti-helminth activity in a process regulated by gut microbiota. Upon helminth infection of intestinal epithelia, directly affects phosphatidylethanolamine contents in the membrane of helminth larvae, likely controlling an array of phospholipid-mediated cellular processes such as membrane fusion and cell division while providing for better immune recognition, ultimately reducing larvae integrity and infectivity. The chain is Phospholipase A2 (PLA2G1B) from Bos taurus (Bovine).